Reading from the N-terminus, the 315-residue chain is Protoheme IX farnesyltransferase (315 aa).

The next 9 membrane-spanning stretches (helical) occupy residues 32 to 52 (VMSL…GHMN), 53 to 73 (PVLA…SGAL), 93 to 113 (IPAG…LSAF), 120 to 140 (LMVN…YAVI), 153 to 173 (IVIG…AATG), 180 to 200 (LVLF…LSLF), 226 to 246 (ALFY…MGFA), 249 to 269 (FYGV…WRLW), and 295 to 315 (IFAV…FGVF).

The protein belongs to the UbiA prenyltransferase family. Protoheme IX farnesyltransferase subfamily.

Its subcellular location is the cell inner membrane. It carries out the reaction heme b + (2E,6E)-farnesyl diphosphate + H2O = Fe(II)-heme o + diphosphate. Its pathway is porphyrin-containing compound metabolism; heme O biosynthesis; heme O from protoheme: step 1/1. Converts heme B (protoheme IX) to heme O by substitution of the vinyl group on carbon 2 of heme B porphyrin ring with a hydroxyethyl farnesyl side group. This is Protoheme IX farnesyltransferase from Brucella suis (strain ATCC 23445 / NCTC 10510).